The following is a 699-amino-acid chain: Conditioned medium factor (699 aa).

The first 18 residues, 1-18 (MRLLLLLILIITINFSYG), serve as a signal peptide directing secretion. Asn130, Asn283, Asn346, and Asn430 each carry an N-linked (GlcNAc...) asparagine glycan. Positions 680-699 (SPQQTTNTEYNKEMSSNSVW) are disordered.

N- and O-glycosylated. Post-translationally, the N-terminus is blocked.

In terms of biological role, involved in cell density sensing and might synchronize the onset of development by triggering aggregation when a majority of the cells in a given area have starved. In Dictyostelium discoideum (Social amoeba), this protein is Conditioned medium factor (cmfA).